The chain runs to 305 residues: Protein ORANGE, chloroplastic (305 aa).

The N-terminal 54 residues, 1–54 (MSCLGRILSVSYPPDPYGSRLSVSKLSSPGRNRRLRWRFTALDSDSSSLDSDSS), are a transit peptide targeting the chloroplast. Transmembrane regions (helical) follow at residues 144–164 (VYYA…GLLA) and 197–217 (IVAS…VVEV). Residues 206–297 (VGVISALMVV…CTGMAMASEH (92 aa)) form a CR-type-like region. The CXXCXGXG motif repeat unit spans residues 228 to 235 (CKYCLGTG). Residues 239–246 (CARCSSTG) form a CXXCXXXG motif repeat. The stretch at 272-279 (CSNCSGAG) is one CXXCXGXG motif repeat. One copy of the CXXCXXXG motif repeat lies at 283–290 (CPTCLCTG).

The protein belongs to the orange-like family. As to quaternary structure, interacts with ERF1-2. As to expression, expressed in young leaves, curds and flower buds.

The protein localises to the plastid. The protein resides in the chloroplast membrane. Its subcellular location is the nucleus. Functionally, involved in chromoplast differentiation. Is associated with a cellular process that triggers the differentiation of pro-plastids or other non-colored plastids into chromoplasts for carotenoid accumulation. Associated with carotenoid accumulation in de-etiolated cotyledons. Controls leaf petiole elongation by suppressing the expression of ERF1 genes. The polypeptide is Protein ORANGE, chloroplastic (Brassica oleracea var. botrytis (Cauliflower)).